Reading from the N-terminus, the 396-residue chain is Tryptophan synthase beta chain (396 aa).

The residue at position 86 (Lys86) is an N6-(pyridoxal phosphate)lysine.

Belongs to the TrpB family. Tetramer of two alpha and two beta chains. It depends on pyridoxal 5'-phosphate as a cofactor.

The enzyme catalyses (1S,2R)-1-C-(indol-3-yl)glycerol 3-phosphate + L-serine = D-glyceraldehyde 3-phosphate + L-tryptophan + H2O. The protein operates within amino-acid biosynthesis; L-tryptophan biosynthesis; L-tryptophan from chorismate: step 5/5. The beta subunit is responsible for the synthesis of L-tryptophan from indole and L-serine. The chain is Tryptophan synthase beta chain from Francisella tularensis subsp. novicida (strain U112).